Here is a 104-residue protein sequence, read N- to C-terminus: L-rhamnose mutarotase (104 aa).

Tyr18 contacts substrate. The active-site Proton donor is the His22. Residues Tyr41 and 76-77 (WW) contribute to the substrate site.

This sequence belongs to the rhamnose mutarotase family. In terms of assembly, homodimer.

It localises to the cytoplasm. It catalyses the reaction alpha-L-rhamnose = beta-L-rhamnose. It functions in the pathway carbohydrate metabolism; L-rhamnose metabolism. Its function is as follows. Involved in the anomeric conversion of L-rhamnose. The sequence is that of L-rhamnose mutarotase from Salmonella arizonae (strain ATCC BAA-731 / CDC346-86 / RSK2980).